Here is a 540-residue protein sequence, read N- to C-terminus: CBL-interacting protein kinase 12 (540 aa).

The segment at 1-23 (MLMATVSPARREPTPQAVRASPM) is disordered. The 255-residue stretch at 46–300 (YELGRVLGQG…VPEIIESDWF (255 aa)) folds into the Protein kinase domain. ATP is bound by residues 52-60 (LGQGSFAKV) and K75. D168 acts as the Proton acceptor in catalysis. Residues 186–215 (DFGLAAGPDQFDPDGLLHTFCGTPAYVAPE) form an activation loop region. Pro residues predominate over residues 333 to 348 (PPPLGLAPPVPPPPQG). The tract at residues 333 to 380 (PPPLGLAPPVPPPPQGDDPDGSGSESDSSVVSCPATLSTGESQRVRGS) is disordered. A compositionally biased stretch (low complexity) spans 353-364 (GSGSESDSSVVS). The region spanning 370 to 406 (STGESQRVRGSLPRPASLNAFDIISFSKGFNLSGLFE) is the NAF domain. The PPI stretch occupies residues 409 to 438 (GNEIRFVSGEPMSDIVKKLEEIAKVKSFTV).

The protein belongs to the protein kinase superfamily. CAMK Ser/Thr protein kinase family. SNF1 subfamily. Requires Mg(2+) as cofactor. Post-translationally, autophosphorylated. Expressed at low levels in leaf blades.

It carries out the reaction L-seryl-[protein] + ATP = O-phospho-L-seryl-[protein] + ADP + H(+). The catalysed reaction is L-threonyl-[protein] + ATP = O-phospho-L-threonyl-[protein] + ADP + H(+). Involved in drought stress tolerance. CIPK serine-threonine protein kinases interact with CBL proteins. Binding of a CBL protein to the regulatory NAF domain of CIPK protein lead to the activation of the kinase in a calcium-dependent manner. In Oryza sativa subsp. japonica (Rice), this protein is CBL-interacting protein kinase 12 (CIPK12).